The primary structure comprises 88 residues: MDCFKVFEVVFQSEINPLLLIPAVATIALTLCCYCYHGYQWIRDRRTARIEEQQAQLPLPLSRISITPGCSMVATTKLTHSRNSVDIY.

Residues 1 to 14 are Lumenal-facing; sequence MDCFKVFEVVFQSE. Residues 15 to 37 form a helical membrane-spanning segment; the sequence is INPLLLIPAVATIALTLCCYCYH. At 38–88 the chain is on the cytoplasmic side; that stretch reads GYQWIRDRRTARIEEQQAQLPLPLSRISITPGCSMVATTKLTHSRNSVDIY.

As to quaternary structure, interacts with 14-3-3zeta. Expressed in hemocytes.

It is found in the early endosome membrane. In terms of biological role, negatively regulates early endosome maturation by binding to and repressing the activity of 14-3-3zeta which prevents the 14-3-3zeta-mediated activation of phosphoinositide 3-kinase Pi3K68D. This, in turn, inhibits the Pi3K68D-mediated conversion of phosphatidylinositol to phosphatidylinositol-3-phosphate and prevents progression of early endosomes through the maturation process which regulates subsequent steps of phagocytic processing. This Drosophila melanogaster (Fruit fly) protein is Hemotin.